A 231-amino-acid polypeptide reads, in one-letter code: Putative Nudix hydrolase FPV054 (231 aa).

In terms of domain architecture, Nudix hydrolase spans 74–217; sequence SKRRSFSEIL…SNEKYEYLHF (144 aa). The short motif at 125 to 146 is the Nudix box element; sequence GRVKNKESIYQCLSRELSEESD. Position 131 (Glu131) interacts with Mg(2+). The Nucleophile role is filled by Glu140. Mg(2+)-binding residues include Glu144 and Asp165.

This sequence belongs to the Nudix hydrolase family. Mg(2+) is required as a cofactor. The cofactor is Mn(2+).

Its function is as follows. Decapping enzyme required for the removal of the 5'-end m7GpppN cap tethered to viral and host mRNAs to allow their decay in cells. May therefore accelerate viral and cellular mRNA turnover to eliminate competing host mRNAs and allow stage-specific synthesis of viral proteins. Acceleration of the turnover of cellular transcripts may even promote the shutoff of host protein synthesis. Does not cleave unmethylated RNAs or RNAs shorter than 24 nucleotides. The sequence is that of Putative Nudix hydrolase FPV054 from Vertebrata (FPV).